The primary structure comprises 243 residues: Protein VERNALIZATION 1 (243 aa).

Residues 1-61 (MGRGKVQLKR…GKLYEFATDS (61 aa)) form the MADS-box domain. In terms of domain architecture, K-box spans 88-178 (QGNWCHEYRK…QKELVEKQKA (91 aa)). Positions 122-178 (LKELQQLEQQLESSLKHIRSRKNQLMHESISELQRKERSLQEENKALQKELVEKQKA) form a coiled coil. Positions 173–243 (VEKQKAHTQQ…PPWMVSHISG (71 aa)) are disordered. Over residues 179–192 (HTQQAQWEQTHPQT) the composition is skewed to polar residues.

Its subcellular location is the nucleus. Its function is as follows. Component of a grass-specific mechanism of vernalization, a process by which prolonged cold exposure provides competence to flower in daylengths longer than 12 hours. Involved in the exit of vernalization and confers flowering competency at the expense of freezing tolerance, probably by promoting the expression of VRN3; this process is essential in cv. Bd29-1 for flowering but seems do not occur in cv. Bd21. This is Protein VERNALIZATION 1 from Brachypodium distachyon (Purple false brome).